A 297-amino-acid polypeptide reads, in one-letter code: Signal-transducing adaptor protein 1 (297 aa).

One can recognise a PH domain in the interval 25 to 121 (PLYFEGFLLV…WRGFILTVTE (97 aa)). Position 170 is a phosphotyrosine (Tyr170). Residues 179–273 (ECFYAVSRKE…GNLRPFIHSA (95 aa)) form the SH2 domain. The tract at residues 271 to 297 (HSADDNFGQDPNIEDRSEKFKKNPHNA) is disordered.

Interacts with URI1; the interaction is phosphorylation-dependent occurs in a growth-dependent manner. Interacts with KIT and CSF1R. Post-translationally, phosphorylated on tyrosine by TEC. Phosphorylated on tyrosine by KIT. In terms of tissue distribution, expression restricted to the bone marrow.

The protein resides in the nucleus. Its subcellular location is the cytoplasm. It is found in the mitochondrion. May function as an adapter molecule downstream of KIT in the proliferation or differentiation of hematopoietic stem cells. The protein is Signal-transducing adaptor protein 1 (Stap1) of Mus musculus (Mouse).